A 92-amino-acid chain; its full sequence is RNA-binding protein Hfq (92 aa).

The 60-residue stretch at 9 to 68 (DPYLNALRRERIPVSIYLVNGIKLQGQIESFDQFVILLKNTVSQMVYKHAISTVVPARSV) folds into the Sm domain. The span at 69-81 (SHNNGGTSHTQQA) shows a compositional bias: polar residues. Positions 69–92 (SHNNGGTSHTQQAPAVEAVADKAE) are disordered.

It belongs to the Hfq family. Homohexamer.

Functionally, RNA chaperone that binds small regulatory RNA (sRNAs) and mRNAs to facilitate mRNA translational regulation in response to envelope stress, environmental stress and changes in metabolite concentrations. Also binds with high specificity to tRNAs. The sequence is that of RNA-binding protein Hfq from Actinobacillus pleuropneumoniae serotype 5b (strain L20).